A 237-amino-acid polypeptide reads, in one-letter code: LexA repressor (237 aa).

Residues 26–46 (FDEMKDALGLKSKSGIHRLIT) constitute a DNA-binding region (H-T-H motif). Residues serine 158 and lysine 196 each act as for autocatalytic cleavage activity in the active site.

Belongs to the peptidase S24 family. Homodimer.

The enzyme catalyses Hydrolysis of Ala-|-Gly bond in repressor LexA.. In terms of biological role, represses a number of genes involved in the response to DNA damage (SOS response), including recA and lexA. In the presence of single-stranded DNA, RecA interacts with LexA causing an autocatalytic cleavage which disrupts the DNA-binding part of LexA, leading to derepression of the SOS regulon and eventually DNA repair. The chain is LexA repressor from Rhodospirillum centenum (strain ATCC 51521 / SW).